A 197-amino-acid chain; its full sequence is Probable GTP-binding protein EngB (197 aa).

One can recognise an EngB-type G domain in the interval 22-197; it reads TGVEVAFAGR…FKEKLDTWYQ (176 aa). Residues 30 to 37, 57 to 61, 75 to 78, 142 to 145, and 177 to 179 contribute to the GTP site; these read GRSNAGKS, GRTQL, DLPG, TKAD, and FSS. The Mg(2+) site is built by S37 and T59.

This sequence belongs to the TRAFAC class TrmE-Era-EngA-EngB-Septin-like GTPase superfamily. EngB GTPase family. It depends on Mg(2+) as a cofactor.

Functionally, necessary for normal cell division and for the maintenance of normal septation. The chain is Probable GTP-binding protein EngB from Francisella tularensis subsp. holarctica (strain FTNF002-00 / FTA).